The sequence spans 56 residues: Ovomucoid (56 aa).

Residues 6–56 form the Kazal-like domain; sequence VDCSEYPKPDCTTEERPLCGSDNKTYGNKCNFCNAVVESNGTLTLSHFGKC. Intrachain disulfides connect cysteine 8-cysteine 38, cysteine 16-cysteine 35, and cysteine 24-cysteine 56. Residue asparagine 45 is glycosylated (N-linked (GlcNAc...) asparagine).

The protein resides in the secreted. This chain is Ovomucoid, found in Francolinus pondicerianus (Grey francolin).